The chain runs to 233 residues: Lipoprotein-releasing system ATP-binding protein LolD (233 aa).

Residues 9-233 (LAINAVSKVF…GILSQSETHR (225 aa)) enclose the ABC transporter domain. Residue 45–52 (GSSGSGKS) participates in ATP binding.

The protein belongs to the ABC transporter superfamily. Lipoprotein translocase (TC 3.A.1.125) family. As to quaternary structure, the complex is composed of two ATP-binding proteins (LolD) and two transmembrane proteins (LolC and LolE).

The protein localises to the cell inner membrane. Part of the ABC transporter complex LolCDE involved in the translocation of mature outer membrane-directed lipoproteins, from the inner membrane to the periplasmic chaperone, LolA. Responsible for the formation of the LolA-lipoprotein complex in an ATP-dependent manner. The chain is Lipoprotein-releasing system ATP-binding protein LolD from Shewanella denitrificans (strain OS217 / ATCC BAA-1090 / DSM 15013).